The primary structure comprises 757 residues: 5-methyltetrahydropteroyltriglutamate--homocysteine methyltransferase (757 aa).

Residues 15–18 (RELK) and lysine 114 contribute to the 5-methyltetrahydropteroyltri-L-glutamate site. L-homocysteine is bound by residues 428–430 (IGS) and glutamate 481. L-methionine-binding positions include 428–430 (IGS) and glutamate 481. 5-methyltetrahydropteroyltri-L-glutamate-binding positions include 512–513 (RC) and tryptophan 558. Aspartate 596 is an L-homocysteine binding site. Aspartate 596 serves as a coordination point for L-methionine. Glutamate 602 contacts 5-methyltetrahydropteroyltri-L-glutamate. Zn(2+) is bound by residues histidine 639, cysteine 641, and glutamate 663. Catalysis depends on histidine 692, which acts as the Proton donor. Cysteine 724 provides a ligand contact to Zn(2+).

This sequence belongs to the vitamin-B12 independent methionine synthase family. Requires Zn(2+) as cofactor.

It carries out the reaction 5-methyltetrahydropteroyltri-L-glutamate + L-homocysteine = tetrahydropteroyltri-L-glutamate + L-methionine. It participates in amino-acid biosynthesis; L-methionine biosynthesis via de novo pathway; L-methionine from L-homocysteine (MetE route): step 1/1. Catalyzes the transfer of a methyl group from 5-methyltetrahydrofolate to homocysteine resulting in methionine formation. The sequence is that of 5-methyltetrahydropteroyltriglutamate--homocysteine methyltransferase from Lactococcus lactis subsp. cremoris (strain MG1363).